Reading from the N-terminus, the 104-residue chain is Guanidinium exporter (104 aa).

Residue methionine 1 is a topological domain, cytoplasmic. A helical membrane pass occupies residues 2 to 19 (AWIILVIAGLLEVIWAIG). Topologically, residues 20-28 (LKYSHGFSR) are periplasmic. The helical transmembrane segment at 29-48 (LTPSIITLVAMAASVFLLAY) threads the bilayer. Over 49–54 (AMKSLP) the chain is Cytoplasmic. The helical transmembrane segment at 55–77 (AGTAYAVWTGIGAVGTAILGIVL) threads the bilayer. The Periplasmic portion of the chain corresponds to 78–81 (LGES). The helical transmembrane segment at 82 to 100 (ASLARILSLGLILAGIIGL) threads the bilayer. The Cytoplasmic portion of the chain corresponds to 101-104 (KLAS).

The protein belongs to the drug/metabolite transporter (DMT) superfamily. Small multidrug resistance (SMR) (TC 2.A.7.1) family. Gdx/SugE subfamily.

The protein localises to the cell inner membrane. Its function is as follows. Guanidinium ion exporter. Couples guanidinium export to the proton motive force, exchanging one guanidinium ion for two protons. The sequence is that of Guanidinium exporter from Yersinia pestis.